Consider the following 404-residue polypeptide: Type II restriction enzyme EcoRII (404 aa).

Residue Y308 is part of the active site.

Homodimer. Mg(2+) serves as cofactor.

The catalysed reaction is Endonucleolytic cleavage of DNA to give specific double-stranded fragments with terminal 5'-phosphates.. Its function is as follows. An E and P subtype restriction enzyme that recognizes the double-stranded sequence 5'-CCWGG-3' and cleaves before C-1. The polypeptide is Type II restriction enzyme EcoRII (ecoRIIR) (Escherichia coli).